The chain runs to 530 residues: Phosphoenolpyruvate carboxykinase (ATP) (530 aa).

R58, Y195, and K201 together coordinate substrate. ATP is bound by residues K201, H220, and G236–T244. Positions 201 and 220 each coordinate Mn(2+). Residue D257 participates in Mn(2+) binding. Residues E285, R321, R440–I441, and T446 contribute to the ATP site. R321 serves as a coordination point for substrate.

The protein belongs to the phosphoenolpyruvate carboxykinase (ATP) family. The cofactor is Mn(2+).

Its subcellular location is the cytoplasm. It carries out the reaction oxaloacetate + ATP = phosphoenolpyruvate + ADP + CO2. Its pathway is carbohydrate biosynthesis; gluconeogenesis. Its function is as follows. Involved in the gluconeogenesis. Catalyzes the conversion of oxaloacetate (OAA) to phosphoenolpyruvate (PEP) through direct phosphoryl transfer between the nucleoside triphosphate and OAA. This chain is Phosphoenolpyruvate carboxykinase (ATP), found in Staphylococcus aureus (strain bovine RF122 / ET3-1).